The chain runs to 456 residues: Alcohol acyltransferase 1 (456 aa).

Residues His166 and Asp382 each act as proton acceptor in the active site.

This sequence belongs to the plant acyltransferase family. In terms of tissue distribution, expressed in fruit.

It catalyses the reaction 3-(methylsulfanyl)propanoyl-CoA + butan-1-ol = butyl 3-(methylsulfanyl)propanoate + CoA. The catalysed reaction is ethanol + benzoyl-CoA = ethyl benzoate + CoA. It carries out the reaction butan-1-ol + benzoyl-CoA = butyl benzoate + CoA. The enzyme catalyses 2-(methylsulfanyl)acetyl-CoA + butan-1-ol = butyl 2-(methylsulfanyl)acetate + CoA. Involved in the biosynthesis of volatile esters which confer kiwifruit flavor. Alcohol acyl transferase that can use a wide range of alcohols as substrate to produce esters. Exhibits benzoyl-CoA:alcohol O-acyltransferase activity. The sequence is that of Alcohol acyltransferase 1 from Actinidia deliciosa (Kiwi).